Here is a 149-residue protein sequence, read N- to C-terminus: 2S seed storage albumin protein (149 aa).

A signal peptide spans 1–22; the sequence is MKLFIILATATLLIAATQAKYL. Disulfide bonds link Cys-38-Cys-98, Cys-52-Cys-87, Cys-88-Cys-133, and Cys-100-Cys-140. No IgE-binding regions lie at residues 41 to 53, 68 to 81, 84 to 95, and 97 to 105; these read QVKM…VKCN, ALSR…ESEE, LRGCCVAMKEME, and ECVCEWMKM. Residues 108 to 117 form an igE-binding region; the sequence is ENQKGRIGET. Residues 121–131 are no IgE-binding; sequence KGIRDLKELPN. An igE-binding region spans residues 132-141; the sequence is KCGISEMECH.

The protein belongs to the 2S seed storage albumins family. In terms of tissue distribution, expressed in seeds (at protein level). Expressed in seeds.

Its function is as follows. Seed storage protein. The chain is 2S seed storage albumin protein from Fagopyrum tataricum (Tartarian buckwheat).